We begin with the raw amino-acid sequence, 56 residues long: Cecropin-A2 (56 aa).

Arginine 55 carries the arginine amide modification.

Belongs to the cecropin family.

The protein resides in the secreted. Functionally, cecropins have lytic and antibacterial activity against several Gram-positive and Gram-negative bacteria. This chain is Cecropin-A2 (CecA2), found in Drosophila yakuba (Fruit fly).